A 473-amino-acid chain; its full sequence is Nitrogenase vanadium-iron protein alpha chain (473 aa).

Cysteine 49, cysteine 74, and cysteine 137 together coordinate [8Fe-7S] cluster. 2 residues coordinate [7Fe-V-9S-C-homocitryl] cluster: cysteine 256 and histidine 422.

This sequence belongs to the NifD/NifK/NifE/NifN family. As to quaternary structure, hexamer of two alpha, two beta, and two delta chains. [8Fe-7S] cluster is required as a cofactor. [7Fe-V-9S-C-homocitryl] cluster serves as cofactor.

It carries out the reaction N2 + 8 reduced [2Fe-2S]-[ferredoxin] + 16 ATP + 16 H2O = H2 + 8 oxidized [2Fe-2S]-[ferredoxin] + 2 NH4(+) + 16 ADP + 16 phosphate + 6 H(+). Its function is as follows. This vanadium-iron protein is part of the nitrogenase complex that catalyzes the key enzymatic reactions in nitrogen fixation. The protein is Nitrogenase vanadium-iron protein alpha chain (vnfD) of Azotobacter chroococcum mcd 1.